Reading from the N-terminus, the 635-residue chain is 5-aminolevulinate synthase, non-specific, mitochondrial (635 aa).

The transit peptide at 1–56 (MEAVVRRCPFLARVSQAFLQKAGPSLLFYAQHCPKMMEAAPPAAARGLATSASRGQ) directs the protein to the mitochondrion. Residues 44–66 (AARGLATSASRGQQVEETPAAQP) show a composition bias toward low complexity. Positions 44 to 94 (AARGLATSASRGQQVEETPAAQPEAKKAKEVAQQNTDGSQPPAGHPPAAAV) are disordered. 3 residues coordinate substrate: Arg212, Ser329, and Lys348. Pyridoxal 5'-phosphate is bound by residues Ser381, His409, and Thr437. Residue Lys440 is part of the active site. Lys440 bears the N6-(pyridoxal phosphate)lysine mark. The pyridoxal 5'-phosphate site is built by Thr469 and Thr470. Substrate is bound at residue Thr557.

It belongs to the class-II pyridoxal-phosphate-dependent aminotransferase family. In terms of assembly, homodimer. The cofactor is pyridoxal 5'-phosphate. As to expression, ubiquitous.

It is found in the mitochondrion inner membrane. The catalysed reaction is succinyl-CoA + glycine + H(+) = 5-aminolevulinate + CO2 + CoA. Its pathway is porphyrin-containing compound metabolism; protoporphyrin-IX biosynthesis; 5-aminolevulinate from glycine: step 1/1. Catalyzes the pyridoxal 5'-phosphate (PLP)-dependent condensation of succinyl-CoA and glycine to form aminolevulinic acid (ALA), with CoA and CO2 as by-products. This Gallus gallus (Chicken) protein is 5-aminolevulinate synthase, non-specific, mitochondrial (ALAS1).